The chain runs to 444 residues: Biotin carboxylase 2 (444 aa).

The region spanning 1–444 is the Biotin carboxylation domain; sequence MFTKVLIANR…VTTDFLKQHL (444 aa). Residues lysine 116, lysine 158, 164-165, 200-203, histidine 208, and histidine 235 each bind ATP; these read GG and EKVI. The ATP-grasp domain maps to 120–317; that stretch reads RKAMEAAGVP…LVEQQLRIAA (198 aa). Residue lysine 237 participates in hydrogencarbonate binding. Residues glutamate 275 and glutamate 288 each contribute to the ATP site. Mg(2+) is bound by residues glutamate 275, glutamate 288, and asparagine 290. Mn(2+) is bound by residues glutamate 275, glutamate 288, and asparagine 290. Positions 292, 295, and 338 each coordinate hydrogencarbonate. Arginine 292 is an active-site residue. Position 338 (arginine 338) interacts with biotin.

Acetyl-CoA carboxylase is a heterohexamer of biotin carboxyl carrier protein, biotin carboxylase and the two subunits of carboxyl transferase in a 2:2 complex. The cofactor is Mg(2+). Mn(2+) serves as cofactor.

The catalysed reaction is N(6)-biotinyl-L-lysyl-[protein] + hydrogencarbonate + ATP = N(6)-carboxybiotinyl-L-lysyl-[protein] + ADP + phosphate + H(+). It participates in lipid metabolism; malonyl-CoA biosynthesis; malonyl-CoA from acetyl-CoA: step 1/1. In terms of biological role, this protein is a component of the acetyl coenzyme A carboxylase complex; first, biotin carboxylase catalyzes the carboxylation of the carrier protein and then the transcarboxylase transfers the carboxyl group to form malonyl-CoA. The polypeptide is Biotin carboxylase 2 (accC2) (Bacillus subtilis (strain 168)).